A 972-amino-acid chain; its full sequence is uncharacterized protein (972 aa).

The first 21 residues, 1-21 (MTNMILLSAVFLSLAILETHC), serve as a signal peptide directing secretion. Topologically, residues 22-932 (ANHISTGIST…KELGEKLYHV (911 aa)) are extracellular. The tract at residues 892–912 (EPTVTTTTESPPPPTTTTRQI) is disordered. A helical membrane pass occupies residues 933–953 (LFFMGVLTVSVAGGVIILSFI). Residues 954 to 972 (GCLIMRKMEDAPQKTKYSV) lie on the Cytoplasmic side of the membrane.

The protein resides in the host membrane. This is an uncharacterized protein from Magallana gigas (Pacific oyster).